The chain runs to 351 residues: Dihydroorotate dehydrogenase (quinone) (351 aa).

Residues Ala61 to Lys65 and Thr85 each bind FMN. Lys65 contacts substrate. Asn110 to Phe114 serves as a coordination point for substrate. Residues Asn139 and Asn172 each coordinate FMN. Residue Asn172 coordinates substrate. Ser175 (nucleophile) is an active-site residue. Asn177 contacts substrate. Residues Lys217 and Thr245 each contribute to the FMN site. Asn246–Thr247 is a substrate binding site. Residues Gly268, Gly297, and Tyr318–Ser319 contribute to the FMN site.

The protein belongs to the dihydroorotate dehydrogenase family. Type 2 subfamily. In terms of assembly, monomer. It depends on FMN as a cofactor.

Its subcellular location is the cell membrane. The catalysed reaction is (S)-dihydroorotate + a quinone = orotate + a quinol. It functions in the pathway pyrimidine metabolism; UMP biosynthesis via de novo pathway; orotate from (S)-dihydroorotate (quinone route): step 1/1. Functionally, catalyzes the conversion of dihydroorotate to orotate with quinone as electron acceptor. The protein is Dihydroorotate dehydrogenase (quinone) of Stenotrophomonas maltophilia (strain R551-3).